The primary structure comprises 400 residues: Nicotinate phosphoribosyltransferase (400 aa).

At His220 the chain carries Phosphohistidine; by autocatalysis.

It belongs to the NAPRTase family. Transiently phosphorylated on a His residue during the reaction cycle. Phosphorylation strongly increases the affinity for substrates and increases the rate of nicotinate D-ribonucleotide production. Dephosphorylation regenerates the low-affinity form of the enzyme, leading to product release.

It carries out the reaction nicotinate + 5-phospho-alpha-D-ribose 1-diphosphate + ATP + H2O = nicotinate beta-D-ribonucleotide + ADP + phosphate + diphosphate. Its pathway is cofactor biosynthesis; NAD(+) biosynthesis; nicotinate D-ribonucleotide from nicotinate: step 1/1. Catalyzes the synthesis of beta-nicotinate D-ribonucleotide from nicotinate and 5-phospho-D-ribose 1-phosphate at the expense of ATP. The sequence is that of Nicotinate phosphoribosyltransferase from Shigella boydii serotype 18 (strain CDC 3083-94 / BS512).